The following is a 411-amino-acid chain: Probable phosphatase HAD1 (411 aa).

A compositionally biased stretch (polar residues) spans 14-23 (LPSPNTSQPP). Positions 14 to 33 (LPSPNTSQPPSAAPSRRGSF) are disordered. Asp61 (nucleophile) is an active-site residue. Asp61, Asp63, and Asp338 together coordinate Mg(2+). Residue Asp63 is the Proton donor of the active site. The disordered stretch occupies residues 296 to 386 (PRPTPDVTPV…QSGQAGVTLD (91 aa)). Positions 326 to 345 (VRNTQTIMKGSDDLTGNDSV) are enriched in polar residues. Residues 362–373 (SVEKRAEMEFHR) show a composition bias toward basic and acidic residues.

The protein belongs to the HAD-like hydrolase superfamily. Post-translationally, phosphorylated.

In terms of biological role, probable phosphatase. Required for cell wall integrity and virulence. This is Probable phosphatase HAD1 from Cryptococcus neoformans var. grubii serotype A (strain H99 / ATCC 208821 / CBS 10515 / FGSC 9487) (Filobasidiella neoformans var. grubii).